The following is a 236-amino-acid chain: tRNA (guanine-N(1)-)-methyltransferase (236 aa).

S-adenosyl-L-methionine contacts are provided by residues G112 and 132 to 137 (VGDFIL).

Belongs to the RNA methyltransferase TrmD family. As to quaternary structure, homodimer.

Its subcellular location is the cytoplasm. The catalysed reaction is guanosine(37) in tRNA + S-adenosyl-L-methionine = N(1)-methylguanosine(37) in tRNA + S-adenosyl-L-homocysteine + H(+). In terms of biological role, specifically methylates guanosine-37 in various tRNAs. This Campylobacter curvus (strain 525.92) protein is tRNA (guanine-N(1)-)-methyltransferase.